The following is a 715-amino-acid chain: Methylcrotonoyl-CoA carboxylase subunit alpha, mitochondrial (715 aa).

The transit peptide at 1–38 (MAAAALLAAVDRNQLRRVPILLLQPREWPWKHRTVKYG) directs the protein to the mitochondrion. In terms of domain architecture, Biotin carboxylation spans 45 to 490 (ITKVLIANRG…HTDFIPQHHK (446 aa)). K159 contacts ATP. Residues 163 to 360 (KSIMAAAGVP…LVEWQLRIAA (198 aa)) enclose the ATP-grasp domain. Position 193 is an N6-acetyllysine (K193). ATP is bound by residues K201 and 207–208 (GG). K233 carries the post-translational modification N6-acetyllysine. The ATP site is built by H251, H278, and E318. The active site involves R335. K490 bears the N6-acetyllysine mark. K577 is subject to N6-acetyllysine; alternate. An N6-succinyllysine; alternate modification is found at K577. The Biotinyl-binding domain occupies 622-711 (SIEVGIPVPK…NRHAPLVEFE (90 aa)). K677 carries the N6-biotinyllysine modification.

In terms of assembly, probably a dodecamer composed of six biotin-containing alpha subunits (MCCC1) and six beta (MCCC2) subunits. Interacts (via the biotin carboxylation domain) with SIRT4. Biotin is required as a cofactor. Acetylated.

The protein resides in the mitochondrion matrix. It carries out the reaction 3-methylbut-2-enoyl-CoA + hydrogencarbonate + ATP = 3-methyl-(2E)-glutaconyl-CoA + ADP + phosphate + H(+). It participates in amino-acid degradation; L-leucine degradation; (S)-3-hydroxy-3-methylglutaryl-CoA from 3-isovaleryl-CoA: step 2/3. Its function is as follows. Biotin-attachment subunit of the 3-methylcrotonyl-CoA carboxylase, an enzyme that catalyzes the conversion of 3-methylcrotonyl-CoA to 3-methylglutaconyl-CoA, a critical step for leucine and isovaleric acid catabolism. This is Methylcrotonoyl-CoA carboxylase subunit alpha, mitochondrial from Rattus norvegicus (Rat).